The primary structure comprises 389 residues: Cobalt-precorrin-5B C(1)-methyltransferase (389 aa).

Positions 1-25 (MESRADHAVPADEGHGATEPPRGRD) are disordered.

This sequence belongs to the CbiD family.

The catalysed reaction is Co-precorrin-5B + S-adenosyl-L-methionine = Co-precorrin-6A + S-adenosyl-L-homocysteine. It participates in cofactor biosynthesis; adenosylcobalamin biosynthesis; cob(II)yrinate a,c-diamide from sirohydrochlorin (anaerobic route): step 6/10. In terms of biological role, catalyzes the methylation of C-1 in cobalt-precorrin-5B to form cobalt-precorrin-6A. In Nitratidesulfovibrio vulgaris (strain ATCC 29579 / DSM 644 / CCUG 34227 / NCIMB 8303 / VKM B-1760 / Hildenborough) (Desulfovibrio vulgaris), this protein is Cobalt-precorrin-5B C(1)-methyltransferase.